The sequence spans 603 residues: MDRGSLLPFQLWCPRPFSKYSQNQPRPPSATLKPPVCPDTSSGTEPDHRPAHLESTPPALAAEAPTSQHAPLLSTAASGDEGRVLLDTWYVIKPGNTKEKVAFFVAHQCGGGSRASSMKVKGHWGSDSSKAKRRRRCLEPTKAPPDQGGQEGTPATEVAPTSSGDDVDLLSVAEMVALVEQRAALALQSYPRPSTPAPVVFVSAEQGGPAKGLGSERRSGGGDCSRVAEAVAHFEAQRDSPPTKGLRKEERPGPGPGEVRIAFRISNVREPQSPDGSLANGGGGRPACPYPGSPGPGTRAKDKITCDLYQLISPSRDALPSNVEFLLARADEASEGETPAPARPEDTPPAPPPPPARDCGASGFHVDVVVTGVVDACIFFGKDGTKNVKEETVCLTVSPEEPPPPGQLFFLQSRGPEGPPEPPPADTASKVPGPEDSEGTTDTSLCRLYRHVSHDFLEIRFKIQRLLEPRQYMLLLPEHVLVKIFSFLPTRALAALKCTCHHFKGIIEAFGVRATDSRWSRDPLYRDDPCKQCRKRYEKGDVSLCRWHPKPYHHDLPYGRSYWMCCRRADRETPGCRLGLHDNNWVLPCNGVGGGRAGREEGR.

The tract at residues 20–54 (YSQNQPRPPSATLKPPVCPDTSSGTEPDHRPAHLE) is disordered. 2 positions are modified to phosphoserine: S21 and S67. Disordered regions lie at residues 111 to 163 (GGSR…PTSS), 235 to 301 (EAQR…TRAK), 332 to 359 (EASE…ARDC), and 396 to 442 (TVSP…GTTD). T347 is modified (phosphothreonine). Residues 347–356 (TPPAPPPPPA) show a composition bias toward pro residues. Positions 470–522 (RQYMLLLPEHVLVKIFSFLPTRALAALKCTCHHFKGIIEAFGVRATDSRWSRD) constitute an F-box domain.

As to quaternary structure, part of a SCF (SKP1-cullin-F-box) protein ligase complex SCF(FBXO46) composed of CUL1, SKP1, RBX1 and FBXO46. In terms of processing, phosphorylated by ATM in response to DNA damage, promoting ubiquitination and degradation by the SCF(FBXO31) complex. ATM-phosphorylated FBXO46 is ubiquitinated and degradaded by the SCF(FBXO31) complex in response to DNA damage.

It functions in the pathway protein modification; protein ubiquitination. Functionally, substrate-recognition component of the SCF(FBXO46) protein ligase complex, which mediates the ubiquitination and degradation of target proteins. In absence of stress, the SCF(FBXO46) complex catalyzes ubiquitination and degradation of MTOR-phosphorylated FBXO31. The sequence is that of F-box only protein 46 (Fbxo46) from Rattus norvegicus (Rat).